Here is a 399-residue protein sequence, read N- to C-terminus: Ribonuclease D (399 aa).

A 3'-5' exonuclease domain is found at 31–197 (RVVTDNTALL…PLYHILEKEL (167 aa)). Residues 239-318 (NPLELSRLRV…SQARRISSND (80 aa)) enclose the HRDC domain.

This sequence belongs to the RNase D family. The cofactor is a divalent metal cation.

It localises to the cytoplasm. The enzyme catalyses Exonucleolytic cleavage that removes extra residues from the 3'-terminus of tRNA to produce 5'-mononucleotides.. In terms of biological role, exonuclease involved in the 3' processing of various precursor tRNAs. Initiates hydrolysis at the 3'-terminus of an RNA molecule and releases 5'-mononucleotides. The sequence is that of Ribonuclease D from Haemophilus influenzae (strain ATCC 51907 / DSM 11121 / KW20 / Rd).